The following is a 337-amino-acid chain: DNA-directed RNA polymerase subunit alpha (337 aa).

The interval 1–233 (MVREKVTVST…DLFIPFLHIE (233 aa)) is alpha N-terminal domain (alpha-NTD). Positions 265-337 (KKIALKSIFI…FVIDLAKNEF (73 aa)) are alpha C-terminal domain (alpha-CTD).

The protein belongs to the RNA polymerase alpha chain family. In plastids the minimal PEP RNA polymerase catalytic core is composed of four subunits: alpha, beta, beta', and beta''. When a (nuclear-encoded) sigma factor is associated with the core the holoenzyme is formed, which can initiate transcription.

Its subcellular location is the plastid. The protein resides in the chloroplast. It catalyses the reaction RNA(n) + a ribonucleoside 5'-triphosphate = RNA(n+1) + diphosphate. In terms of biological role, DNA-dependent RNA polymerase catalyzes the transcription of DNA into RNA using the four ribonucleoside triphosphates as substrates. The chain is DNA-directed RNA polymerase subunit alpha from Nicotiana tomentosiformis (Tobacco).